A 388-amino-acid chain; its full sequence is MRYLTAGESHGPSLTTIIEGIPSGLELSSEVINLELKRRQGGYGRGARMTIENDKVSITSGVRHGKTTGAPITLIIENKDHKKWTDIMAVEDLPDKLKRKRKVIHPRPGHADLVGGIKYGYSDLRNALERSSARETAARVAVGAVAKCLLSQLGIETMHHVSVFGGVTIDIPETLTYEELRTKAQKSELSIVNSEQEVEIKTYIDQIKKDGDTLGGVVQTIVTGVPVGLGSYVQWDKKLDAKLAQAVMSINAFKGVEFGEGFAMGYQKGSEVMDEIIWSEEEGYSRKSNHLGGFEGGVTNGQPLLIKGVMKPIPTLYKPLQSVNIETHQPYKASVERSDPTALPAAGVVMENVVATVLAQEILEKFSSDTMKELTKAFQDYTNYTKRY.

2 residues coordinate NADP(+): arginine 39 and arginine 45. FMN is bound by residues 130–132, 251–252, glycine 296, 311–315, and arginine 337; these read RSS, NA, and KPIPT.

The protein belongs to the chorismate synthase family. As to quaternary structure, homotetramer. The cofactor is FMNH2.

It carries out the reaction 5-O-(1-carboxyvinyl)-3-phosphoshikimate = chorismate + phosphate. Its pathway is metabolic intermediate biosynthesis; chorismate biosynthesis; chorismate from D-erythrose 4-phosphate and phosphoenolpyruvate: step 7/7. Catalyzes the anti-1,4-elimination of the C-3 phosphate and the C-6 proR hydrogen from 5-enolpyruvylshikimate-3-phosphate (EPSP) to yield chorismate, which is the branch point compound that serves as the starting substrate for the three terminal pathways of aromatic amino acid biosynthesis. This reaction introduces a second double bond into the aromatic ring system. In Streptococcus uberis (strain ATCC BAA-854 / 0140J), this protein is Chorismate synthase.